Reading from the N-terminus, the 465-residue chain is UDP-glucose:undecaprenyl-phosphate glucose-1-phosphate transferase (465 aa).

5 helical membrane passes run 23-43 (FSDI…NDYF), 46-66 (LHYV…GGIT), 82-102 (ILIL…VTLF), 105-125 (FDLT…GFVV), and 280-300 (IIVS…IATA).

The protein belongs to the bacterial sugar transferase family.

It localises to the cell inner membrane. It catalyses the reaction di-trans,octa-cis-undecaprenyl phosphate + UDP-alpha-D-glucose = alpha-D-glucosyl di-trans,octa-cis-undecaprenyl diphosphate + UMP. It participates in capsule biogenesis; capsule polysaccharide biosynthesis. In terms of biological role, is likely the initiating enzyme for the K2 capsular polysaccharide synthesis. Catalyzes the transfer of the glucose-1-phosphate moiety from UDP-Glc onto the carrier lipid undecaprenyl phosphate (C55-P), forming a phosphoanhydride bond yielding to glucosyl-pyrophosphoryl-undecaprenol (Glc-PP-C55). The polypeptide is UDP-glucose:undecaprenyl-phosphate glucose-1-phosphate transferase (Klebsiella pneumoniae).